Reading from the N-terminus, the 178-residue chain is uncharacterized protein (178 aa).

The tract at residues 64-103 (GVSDNTNKTTAKDNVSDKSSENEVAQPKQVTPPVDATGNT) is disordered. Positions 73 to 84 (TAKDNVSDKSSE) are enriched in basic and acidic residues.

This is an uncharacterized protein from Acidianus sp. F28 (AFV-2).